The sequence spans 347 residues: Quinolinate synthase (347 aa).

The iminosuccinate site is built by His-47 and Ser-68. [4Fe-4S] cluster is bound at residue Cys-113. Iminosuccinate contacts are provided by residues 139–141 (YAN) and Ser-156. Cys-200 is a binding site for [4Fe-4S] cluster. Iminosuccinate-binding positions include 226-228 (HPE) and Thr-243. Cys-297 contributes to the [4Fe-4S] cluster binding site.

The protein belongs to the quinolinate synthase family. Type 1 subfamily. It depends on [4Fe-4S] cluster as a cofactor.

The protein resides in the cytoplasm. It catalyses the reaction iminosuccinate + dihydroxyacetone phosphate = quinolinate + phosphate + 2 H2O + H(+). It participates in cofactor biosynthesis; NAD(+) biosynthesis; quinolinate from iminoaspartate: step 1/1. In terms of biological role, catalyzes the condensation of iminoaspartate with dihydroxyacetone phosphate to form quinolinate. This is Quinolinate synthase from Shigella dysenteriae serotype 1 (strain Sd197).